A 483-amino-acid polypeptide reads, in one-letter code: Transmembrane protein 39B (483 aa).

N9 is a glycosylation site (N-linked (GlcNAc...) asparagine). 7 helical membrane passes run 76-96, 114-134, 158-182, 187-207, 281-301, 414-434, and 440-460; these read HLLF…VHYI, TSLN…IVLA, LLVA…ILLF, FFNL…LQLG, EVLL…VWFV, VLNI…YSLL, and HHTI…FKLL.

The protein belongs to the TMEM39 family.

Its subcellular location is the endoplasmic reticulum membrane. May protect the cells against DNA damage caused by exposure to the cold-warming stress and facilitates tissue damage repair during the recovery phase. The polypeptide is Transmembrane protein 39B (Xenopus tropicalis (Western clawed frog)).